The chain runs to 414 residues: Arrestin domain-containing protein 3 (414 aa).

Short sequence motifs (PPxY motif) lie at residues 346–349 and 391–394; these read PPSY and PPLY. Residues 393–414 form a disordered region; it reads LYSEIDPNPDQSADDRPSCPSR. Residues 405 to 414 are compositionally biased toward basic and acidic residues; that stretch reads ADDRPSCPSR.

The protein belongs to the arrestin family. Interacts (via PPxY motifs) with NEDD4 (via WW domains). Interacts with ADRB2. Interacts with ADRB3. Interacts with HGS (via PPxY motifs). Does not bind TXN (thioredoxin). Interacts with ITCH. Interacts with WWP1 (via WW domains). As to expression, highly expressed in skeletal muscle, placenta, kidney, lung, liver, blood, adrenal gland, lymph node, mammary gland, thyroid, and trachea. Very low levels in colon, thymus, spleen, small intestine, bladder and bone marrow. Strong expression in differentiated adipocytes compared to preadipocytes. Detected in omental fat and subcutaneous fat tissue.

Its subcellular location is the cytoplasm. It localises to the cell membrane. It is found in the lysosome. The protein localises to the endosome. The protein resides in the early endosome. Its function is as follows. Adapter protein that plays a role in regulating cell-surface expression of adrenergic receptors and probably also other G protein-coupled receptors. Plays a role in NEDD4-mediated ubiquitination and endocytosis af activated ADRB2 and subsequent ADRB2 degradation. May recruit NEDD4 to ADRB2. Alternatively, may function as adapter protein that does not play a major role in recruiting NEDD4 to ADRB2, but rather plays a role in a targeting ADRB2 to endosomes. This Homo sapiens (Human) protein is Arrestin domain-containing protein 3 (ARRDC3).